We begin with the raw amino-acid sequence, 29 residues long: Cytochrome b6-f complex subunit 8 (29 aa).

The helical transmembrane segment at 3–23 (IVDIAWAALMVVFTFSLSLVV) threads the bilayer.

It belongs to the PetN family. In terms of assembly, the 4 large subunits of the cytochrome b6-f complex are cytochrome b6, subunit IV (17 kDa polypeptide, PetD), cytochrome f and the Rieske protein, while the 4 small subunits are PetG, PetL, PetM and PetN. The complex functions as a dimer.

The protein resides in the plastid. The protein localises to the chloroplast thylakoid membrane. Functionally, component of the cytochrome b6-f complex, which mediates electron transfer between photosystem II (PSII) and photosystem I (PSI), cyclic electron flow around PSI, and state transitions. This Gnetum parvifolium (Small-leaved jointfir) protein is Cytochrome b6-f complex subunit 8.